Reading from the N-terminus, the 213-residue chain is Outer-membrane lipoprotein carrier protein (213 aa).

An N-terminal signal peptide occupies residues 1–18 (MKYFATICIAAYAGLAGA).

The protein belongs to the LolA family. As to quaternary structure, monomer.

It is found in the periplasm. Its function is as follows. Participates in the translocation of lipoproteins from the inner membrane to the outer membrane. Only forms a complex with a lipoprotein if the residue after the N-terminal Cys is not an aspartate (The Asp acts as a targeting signal to indicate that the lipoprotein should stay in the inner membrane). In Albidiferax ferrireducens (strain ATCC BAA-621 / DSM 15236 / T118) (Rhodoferax ferrireducens), this protein is Outer-membrane lipoprotein carrier protein.